Reading from the N-terminus, the 628-residue chain is UvrABC system protein C (628 aa).

Positions 20-99 constitute a GIY-YIG domain; the sequence is TSAGVYLMRD…IKTHKPRYNV (80 aa). A UVR domain is found at 209 to 244; the sequence is AELLAQLEDQMQTAAAAMNFEHAARLRDRITGLNQL.

This sequence belongs to the UvrC family. In terms of assembly, interacts with UvrB in an incision complex.

The protein resides in the cytoplasm. The UvrABC repair system catalyzes the recognition and processing of DNA lesions. UvrC both incises the 5' and 3' sides of the lesion. The N-terminal half is responsible for the 3' incision and the C-terminal half is responsible for the 5' incision. The protein is UvrABC system protein C of Gloeobacter violaceus (strain ATCC 29082 / PCC 7421).